The chain runs to 251 residues: MSGHSKWATTKHKKAVIDAKRGKMFAKLIKNIEVAARVGGGDPGGNPTLYDAIQKAKKSSVPNDNIERARKRGAGEEAGGADWQNITYEGYGPNGVAVLVECLTDNRNRAAGEVRVAMTRNGGNMADPGSVAYLFSRKGVVTLEKNGLTEDDVLLAVLEAGAEEVNDLGDSFEIISEPSDLVAVRTALQEAGIDYDSADASFQPSVTVPVDLEGARKVLKLVDALEDSDDVQDVYTNMDIPDDVAAQLDEE.

The protein belongs to the TACO1 family.

Its subcellular location is the cytoplasm. The chain is Probable transcriptional regulatory protein MSMEG_2940/MSMEI_2866 from Mycolicibacterium smegmatis (strain ATCC 700084 / mc(2)155) (Mycobacterium smegmatis).